A 159-amino-acid polypeptide reads, in one-letter code: Ribosomal RNA large subunit methyltransferase H (159 aa).

Residues leucine 76, glycine 108, and 127 to 132 (FGKLTL) contribute to the S-adenosyl-L-methionine site.

The protein belongs to the RNA methyltransferase RlmH family. In terms of assembly, homodimer.

It is found in the cytoplasm. It carries out the reaction pseudouridine(1915) in 23S rRNA + S-adenosyl-L-methionine = N(3)-methylpseudouridine(1915) in 23S rRNA + S-adenosyl-L-homocysteine + H(+). In terms of biological role, specifically methylates the pseudouridine at position 1915 (m3Psi1915) in 23S rRNA. This chain is Ribosomal RNA large subunit methyltransferase H, found in Latilactobacillus sakei subsp. sakei (strain 23K) (Lactobacillus sakei subsp. sakei).